Reading from the N-terminus, the 456-residue chain is MSKIVVVGANHAGTACIKTMLTNYGDANEIVVFDQNSNISFLGCGMALWIGEQIAGPEGLFYSDKEELESLGAKVYMESPVQSIDYDAKTVTALVDGKNHVETYDKLIFATGSQPILPPIKGAEIKEGSLEFEATLENLQFVKLYQNSADVIAKLENKDIKRVAVVGAGYIGVELAEAFQRKGKEVVLIDVVDTCLAGYYDRDLTDLMAKNMEEHGIQLAFGETVKEVAGNGKVEKIITDKNEYDVDMVILAVGFRPNTTLGNGKIDLFRNGAFLVNKRQETSIPGVYAIGDCATIYDNATRDTNYIALASNAVRTGIVAAHNACGTDLEGIGVQGSNGISIYGLHMVSTGLTLEKAKRLGFDAAVTEYTDNQKPEFIEHGNFPVTIKIVYDKDSRRILGAQMAAREDMSMGIHMFSLAIQEGVTIEKLALTDIFFLPHFNKPYNYITMAALGAKD.

FAD is bound at residue Asn-10. The active-site Proton acceptor is the His-11. Positions 12, 34, 35, 44, 81, 110, 113, 143, and 170 each coordinate FAD. Cys-44 acts as the Redox-active in catalysis. Position 44 is a cysteine sulfinic acid (-SO2H) (Cys-44). 4 residues coordinate NAD(+): Ile-171, Asp-190, Tyr-199, and Gly-254. Asp-292 contacts FAD. Ala-308 is an NAD(+) binding site. 3 residues coordinate FAD: Leu-309, Ala-310, and Ser-311. Residue Gly-339 coordinates NAD(+). Residue Phe-436 participates in FAD binding.

It depends on FAD as a cofactor.

It carries out the reaction 2 NADH + O2 + 2 H(+) = 2 NAD(+) + 2 H2O. In terms of biological role, catalyzes the four-electron reduction of molecular oxygen to water. This Streptococcus pyogenes serotype M6 (strain ATCC BAA-946 / MGAS10394) protein is NADH oxidase.